Here is a 425-residue protein sequence, read N- to C-terminus: Protein PTI1 (425 aa).

Position 272 is a phosphoserine (serine 272).

As to quaternary structure, component of the cleavage and polyadenylation factor (CPF) complex, which is composed of PTI1, SYC1, SSU72, GLC7, MPE1, REF2, PFS2, PTA1, YSH1/BRR5, SWD2, CFT2/YDH1, YTH1, CFT1/YHH1, FIP1 and PAP1. Component of the APT complex, which is a subcomplex of CPF, and is composed of PTI1, SYC1, SSU72, GLC7, REF2, PTA1 and SWD2.

It is found in the nucleus. Component of the cleavage and polyadenylation factor (CPF) complex, which plays a key role in polyadenylation-dependent pre-mRNA 3'-end formation and cooperates with cleavage factors including the CFIA complex and NAB4/CFIB. Component of the APT complex, which may be involved in polyadenylation-independent transcript 3'-end formation. PTI1 is required for 3'-end formation of snoRNAs. The chain is Protein PTI1 (PTI1) from Saccharomyces cerevisiae (strain ATCC 204508 / S288c) (Baker's yeast).